The following is a 147-amino-acid chain: Large ribosomal subunit protein uL13 (147 aa).

Residues 126 to 147 (AGPTHPHQAQQPVPYEIKQVAQ) form a disordered region.

The protein belongs to the universal ribosomal protein uL13 family. In terms of assembly, part of the 50S ribosomal subunit.

This protein is one of the early assembly proteins of the 50S ribosomal subunit, although it is not seen to bind rRNA by itself. It is important during the early stages of 50S assembly. This Parafrankia sp. (strain EAN1pec) protein is Large ribosomal subunit protein uL13.